Consider the following 285-residue polypeptide: Putative phosphatase MG125 (285 aa).

Asp-8 (nucleophile) is an active-site residue. Position 8 (Asp-8) interacts with Mg(2+). A phosphate-binding site is contributed by Leu-9. A Mg(2+)-binding site is contributed by Asp-10. Residues 44–45 (TG) and Lys-205 each bind phosphate. Mg(2+) is bound by residues Asp-228 and Ser-229. Asn-231 contributes to the phosphate binding site.

It belongs to the HAD-like hydrolase superfamily. Cof family. The cofactor is Mg(2+).

This Mycoplasma genitalium (strain ATCC 33530 / DSM 19775 / NCTC 10195 / G37) (Mycoplasmoides genitalium) protein is Putative phosphatase MG125.